Consider the following 245-residue polypeptide: Neurovirulence factor ICP34.5 (245 aa).

Positions 1-15 are enriched in basic residues; that stretch reads MARRRRRHRGPRRPR. The required for nucleolar localization stretch occupies residues 1–17; it reads MARRRRRHRGPRRPRPP. Disordered regions lie at residues 1 to 122 and 143 to 172; these read MARR…PFRL and RRAG…PATP. The segment covering 25–36 has biased composition (polar residues); it reads TAQSQVTSTPNS. Positions 67-77 are enriched in acidic residues; it reads ASDDDDDDDWP. 2 stretches are compositionally biased toward pro residues: residues 78 to 87 and 113 to 122; these read DSPPPEPAPE and SHPPSRPFRL. The Nuclear export signal signature appears at 122–131; sequence LPPRLALRLR. 6 tandem repeats follow at residues 155–157, 158–160, 161–163, 164–166, 167–169, and 170–172. The segment at 155-172 is 6 X 3 AA tandem repeats of A-T-P; it reads ATPATPATPATPATPATP. Positions 158–172 are enriched in low complexity; that stretch reads ATPATPATPATPATP. The tract at residues 172-185 is binding to PP1CA; sequence PARVRFSPHVRVRH. The interaction with host PPP1CA stretch occupies residues 172–185; the sequence is PARVRFSPHVRVRH. Residues 187-245 are important for interferon resistance; the sequence is VVWASAARLARRGSWARERADRARFRRRVAEAEAVIGPCLGPEARARALARGAGPANSV. A Bipartite nuclear localization signal motif is present at residues 197-215; sequence RRGSWARERADRARFRRRV. Positions 215–230 are interaction with host EIF2S1/EIF-2ALPHA; the sequence is VAEAEAVIGPCLGPEA.

It belongs to the PPP1R15 family. As to quaternary structure, interacts with host PPP1CA to form a high-molecular-weight complex that dephosphorylates EIF2S1/eIF-2alpha. Interacts with host EIF2S1/eIF-2alpha; this interaction is crucial for the specific dephosphorylation of EIF2S1/eIF-2alpha by PPP1CA. Binds to proliferating cell nuclear antigen (PCNA), which may release host cells from growth arrest and facilitate viral replication. Interacts (via N-terminus) with host C1QBP and PRKCA. Interacts with protein UL31. Interacts with host TBK1. Interacts with host STING/TMEM173; this interaction inhibits the intracellular DNA sensing pathway. Interacts with host BECN1; this interaction modulates host autophagy.

It localises to the host cytoplasm. It is found in the host nucleus. The protein resides in the host nucleolus. Its subcellular location is the virion. Inhibits the establishment of the immune response and of the integrated stress response (ISR) in the infected cell. Plays essential roles in viral nuclear egress to mediate capsid transit across the nuclear membrane. Facilitates nuclear egress cooperatively with host C1QBP and protein kinase C/PKC to induce lamin A/C phosphorylation and subsequent reorganization. In turn, lamina disassembles and nuclear egress occurs. Recruits the serine/threonine protein phosphatase PPP1CA/PP1-alpha to dephosphorylate the translation initiation factor EIF2S1/eIF-2alpha, thereby couteracting the host shutoff of protein synthesis involving double-stranded RNA-dependent protein kinase EIF2AK2/PKR. In turn, controls host IRF3 activation and subsequently inhibits host interferon response. Controls the DNA sensing pathway by interacting with and inhibiting host STING/TMEM173. Also down-modulates the host MHC class II proteins cell surface expression. Acts as a neurovirulence factor that has a profound effect on the growth of the virus in central nervous system tissue, by interacting with host BECN1 and thereby antagonizing the host autophagy response. The polypeptide is Neurovirulence factor ICP34.5 (RL1) (Homo sapiens (Human)).